Consider the following 141-residue polypeptide: Superoxide dismutase [Cu-Zn], chloroplastic (141 aa).

Positions 33, 35, and 50 each coordinate Cu cation. Cysteines 44 and 133 form a disulfide. Residues H50, H58, H67, and D70 each coordinate Zn(2+). H107 lines the Cu cation pocket.

This sequence belongs to the Cu-Zn superoxide dismutase family. As to quaternary structure, homotetramer. Cu cation serves as cofactor. Zn(2+) is required as a cofactor.

Its subcellular location is the plastid. The protein resides in the chloroplast. The catalysed reaction is 2 superoxide + 2 H(+) = H2O2 + O2. In terms of biological role, destroys radicals which are normally produced within the cells and which are toxic to biological systems. The chain is Superoxide dismutase [Cu-Zn], chloroplastic (SODCP) from Pinus sylvestris (Scotch pine).